A 752-amino-acid polypeptide reads, in one-letter code: Photosystem I P700 chlorophyll a apoprotein A1 (752 aa).

Helical transmembrane passes span 73–96, 159–182, 198–222, 294–312, 349–372, 388–414, 436–458, and 533–551; these read IFSA…FHGA, LYWI…FHYH, MNHH…HIAL, IAHH…GHMY, WHAQ…HHMY, LSLF…IFMV, AIIS…LYIH, and FMVH…LILL. [4Fe-4S] cluster contacts are provided by Cys-575 and Cys-584. 2 helical membrane passes run 591 to 612 and 666 to 688; these read HVFL…HFSW and SSAY…MFLF. Chlorophyll a' is bound at residue His-677. Residues Met-685 and Tyr-693 each coordinate chlorophyll a. Trp-694 provides a ligand contact to phylloquinone. Residues 726–746 form a helical membrane-spanning segment; sequence AVGLAHYLLGGIGTTWSFFLA.

This sequence belongs to the PsaA/PsaB family. The PsaA/B heterodimer binds the P700 chlorophyll special pair and subsequent electron acceptors. PSI consists of a core antenna complex that captures photons, and an electron transfer chain that converts photonic excitation into a charge separation. The eukaryotic PSI reaction center is composed of at least 11 subunits. Requires P700 is a chlorophyll a/chlorophyll a' dimer, A0 is one or more chlorophyll a, A1 is one or both phylloquinones and FX is a shared 4Fe-4S iron-sulfur center. as cofactor.

It localises to the plastid. The protein localises to the chloroplast thylakoid membrane. It carries out the reaction reduced [plastocyanin] + hnu + oxidized [2Fe-2S]-[ferredoxin] = oxidized [plastocyanin] + reduced [2Fe-2S]-[ferredoxin]. Its function is as follows. PsaA and PsaB bind P700, the primary electron donor of photosystem I (PSI), as well as the electron acceptors A0, A1 and FX. PSI is a plastocyanin/cytochrome c6-ferredoxin oxidoreductase, converting photonic excitation into a charge separation, which transfers an electron from the donor P700 chlorophyll pair to the spectroscopically characterized acceptors A0, A1, FX, FA and FB in turn. Oxidized P700 is reduced on the lumenal side of the thylakoid membrane by plastocyanin or cytochrome c6. The chain is Photosystem I P700 chlorophyll a apoprotein A1 from Trieres chinensis (Marine centric diatom).